Reading from the N-terminus, the 383-residue chain is ATP phosphoribosyltransferase regulatory subunit (383 aa).

It belongs to the class-II aminoacyl-tRNA synthetase family. HisZ subfamily. Heteromultimer composed of HisG and HisZ subunits.

The protein resides in the cytoplasm. It functions in the pathway amino-acid biosynthesis; L-histidine biosynthesis; L-histidine from 5-phospho-alpha-D-ribose 1-diphosphate: step 1/9. Its function is as follows. Required for the first step of histidine biosynthesis. May allow the feedback regulation of ATP phosphoribosyltransferase activity by histidine. This is ATP phosphoribosyltransferase regulatory subunit from Neisseria meningitidis serogroup C / serotype 2a (strain ATCC 700532 / DSM 15464 / FAM18).